A 291-amino-acid polypeptide reads, in one-letter code: Geranyl diphosphate 2-C-methyltransferase (291 aa).

The protein belongs to the geranyl diphosphate 2-C-methyltransferase family. Requires Mg(2+) as cofactor.

It catalyses the reaction (2E)-geranyl diphosphate + S-adenosyl-L-methionine = (E)-2-methylgeranyl diphosphate + S-adenosyl-L-homocysteine + H(+). Catalyzes the SAM-dependent methylation of geranyl diphosphate (GPP) to yield (E)-2-methylgeranyl diphosphate (2-MeGPP). The polypeptide is Geranyl diphosphate 2-C-methyltransferase (Streptomyces ambofaciens (strain ATCC 23877 / 3486 / DSM 40053 / JCM 4204 / NBRC 12836 / NRRL B-2516)).